We begin with the raw amino-acid sequence, 322 residues long: MQKNRNTFSWVKEQMTRCISVSMMIYVITRASISNAYPIFAQQSYENPREATGRIVCANCHLANKPVDIEVPQAVLPDTVFEAVVRIPYDMQLKQVLANGKKGGLNVGAVLILPEGFELAPPDRISPEMKEKMGNLSFQSYRPNKKNILVVGPVPGQKYSEIVFPILSPDPATKKEVHFLKYPIYVGGNRGRGQIYPDGSKSNNTVYNASAAGIVSKIVRKEKKGGYEITISDASNGHETVDIIPPGPELLVSEGEYIKLDQPLTSNPNVGGFGQGDAEIVLQDPLRIQGLLFFLASVILAQIFLVLKKKQFEKVQLAEMNF.

Residues 1-36 (MQKNRNTFSWVKEQMTRCISVSMMIYVITRASISNA) form the signal peptide. Residues Y37, C57, C60, and H61 each coordinate heme. The helical transmembrane segment at 288–308 (IQGLLFFLASVILAQIFLVLK) threads the bilayer.

This sequence belongs to the cytochrome f family. As to quaternary structure, the 4 large subunits of the cytochrome b6-f complex are cytochrome b6, subunit IV (17 kDa polypeptide, petD), cytochrome f and the Rieske protein, while the 4 small subunits are PetG, PetL, PetM and PetN. The complex functions as a dimer. Heme serves as cofactor.

The protein localises to the plastid. Its subcellular location is the chloroplast thylakoid membrane. Its function is as follows. Component of the cytochrome b6-f complex, which mediates electron transfer between photosystem II (PSII) and photosystem I (PSI), cyclic electron flow around PSI, and state transitions. The polypeptide is Cytochrome f (Nymphaea alba (White water-lily)).